A 322-amino-acid chain; its full sequence is FAD-dependent monooxygenase subE (322 aa).

FAD-binding residues include E35, G49, R108, and D313.

This sequence belongs to the paxM FAD-dependent monooxygenase family. Requires FAD as cofactor.

It functions in the pathway secondary metabolite biosynthesis; terpenoid biosynthesis. FAD-dependent monooxygenase; part of the gene cluster that mediates the biosynthesis of the immunosuppressants subglutinols, meroterpenoids consisting of an alpha-pyrone (4-hydroxy-5,6-dimethyl-2-pyrone) moiety attached to a decalin core fused to a five-membered cyclic ether carrying a prenylside chain. The first step of the pathway is the synthesis of the alpha-pyrone moiety by the polyketide synthase subA via condensation of one acetyl-CoA starter unit with 3 malonyl-CoA units and 2 methylations. The alpha-pyrone is then combined with geranylgeranyl pyrophosphate (GGPP) formed by the GGPP synthase subD through the action of the prenyltransferase subC to yield a linear alpha-pyrone diterpenoid. Subsequent steps in the subglutinol biosynthetic pathway involve the decalin core formation, which is thought to be initiated by the epoxidation of the C10-C11 olefin by the FAD-dependent oxidoreductase subE. The following cyclization cascade would be catalyzed by the terpene cyclase subB. Lastly, the FAD-dependent dehydrogenase subF probably catalyzes the five-membered cyclic ether formation to complete the formation of subglutinol A. Subsequent redox reactions appear to give rise to subglutinol C and D, however, it remains unclear which enzymes are responsible for these transformations. SubD may have secondary function in the conversion of the identified subglutinols to subglutinol analog 45, which seems to be the major product of the cluster. The polypeptide is FAD-dependent monooxygenase subE (Metarhizium robertsii (strain ARSEF 23 / ATCC MYA-3075) (Metarhizium anisopliae (strain ARSEF 23))).